A 225-amino-acid chain; its full sequence is Phosphoserine phosphatase (225 aa).

Met-1 is modified (N-acetylmethionine). Asp-20 acts as the Nucleophile in catalysis. Positions 20 and 22 each coordinate Mg(2+). 20–22 contributes to the L-serine binding site; sequence DVD. Residue Asp-22 is the Proton donor of the active site. Met-52 lines the O-phospho-L-serine pocket. Gly-53 provides a ligand contact to phosphate. Residues 109–111 and Lys-158 each bind L-serine; that span reads SGG. O-phospho-L-serine is bound by residues 109-111 and Lys-158; that span reads SGG. Asp-179 contributes to the Mg(2+) binding site. Residue Thr-182 participates in O-phospho-L-serine binding. Thr-182 provides a ligand contact to phosphate.

This sequence belongs to the HAD-like hydrolase superfamily. SerB family. In terms of assembly, homodimer. Mg(2+) is required as a cofactor.

It is found in the cytoplasm. It localises to the cytosol. It carries out the reaction O-phospho-L-serine + H2O = L-serine + phosphate. It catalyses the reaction O-phospho-D-serine + H2O = D-serine + phosphate. Its pathway is amino-acid biosynthesis; L-serine biosynthesis; L-serine from 3-phospho-D-glycerate: step 3/3. Catalyzes the last irreversible step in the biosynthesis of L-serine from carbohydrates, the dephosphorylation of O-phospho-L-serine to L-serine. L-serine can then be used in protein synthesis, to produce other amino acids, in nucleotide metabolism or in glutathione synthesis, or can be racemized to D-serine, a neuromodulator. May also act on O-phospho-D-serine. In Mus musculus (Mouse), this protein is Phosphoserine phosphatase.